Consider the following 464-residue polypeptide: Argininosuccinate lyase (464 aa).

The residue at position 2 (Ala-2) is an N-acetylalanine. Lys-7 is subject to N6-acetyllysine. Residue Ser-27 participates in 2-(N(omega)-L-arginino)succinate binding. Lys-69 carries the post-translational modification N6-acetyllysine. The 2-(N(omega)-L-arginino)succinate site is built by Asn-114 and Thr-159. His-160 serves as the catalytic Proton acceptor. The active-site Proton donor is Ser-281. Lys-288 is modified (N6-acetyllysine). Residues Asn-289, Tyr-321, Gln-326, and Lys-329 each contribute to the 2-(N(omega)-L-arginino)succinate site.

Belongs to the lyase 1 family. Argininosuccinate lyase subfamily. As to quaternary structure, homotetramer. Forms tissue-specific complexes with ASS1, SLC7A1, HSP90AA1 and nitric oxide synthase NOS1, NOS2 or NOS3; the complex maintenance is independent of ASL catalytic function. In terms of processing, acetylation modifies enzyme activity in response to alterations of extracellular nutrient availability. Acetylation increased with trichostin A (TSA) or with nicotinamide (NAM). Glucose increases acetylation by about a factor of 3 with decreasing enzyme activity. Acetylation on Lys-288 is decreased on the addition of extra amino acids resulting in activation of enzyme activity.

It catalyses the reaction 2-(N(omega)-L-arginino)succinate = fumarate + L-arginine. The protein operates within amino-acid biosynthesis; L-arginine biosynthesis; L-arginine from L-ornithine and carbamoyl phosphate: step 3/3. Its pathway is nitrogen metabolism; urea cycle; L-arginine and fumarate from (N(omega)-L-arginino)succinate: step 1/1. With respect to regulation, enzyme activity is regulated by acetylation. Catalyzes the reversible cleavage of L-argininosuccinate to fumarate and L-arginine, an intermediate step reaction in the urea cycle mostly providing for hepatic nitrogen detoxification into excretable urea as well as de novo L-arginine synthesis in nonhepatic tissues. Essential regulator of intracellular and extracellular L-arginine pools. As part of citrulline-nitric oxide cycle, forms tissue-specific multiprotein complexes with argininosuccinate synthase ASS1, transport protein SLC7A1 and nitric oxide synthase NOS1, NOS2 or NOS3, allowing for cell-autonomous L-arginine synthesis while channeling extracellular L-arginine to nitric oxide synthesis pathway. The polypeptide is Argininosuccinate lyase (ASL) (Macaca fascicularis (Crab-eating macaque)).